The sequence spans 112 residues: Larval cuticle protein III/IV (112 aa).

Positions M1–A16 are cleaved as a signal peptide. Positions P31–P92 constitute a Chitin-binding type R&amp;R domain.

Component of the larval cuticle. In Drosophila miranda (Fruit fly), this protein is Larval cuticle protein III/IV (Lcp3).